The primary structure comprises 242 residues: Small ribosomal subunit protein uS3 (242 aa).

Positions 39–109 constitute a KH type-2 domain; sequence IRQYVEKNLA…QIRINVIEVA (71 aa). Residues 220 to 242 form a disordered region; that stretch reads VPAQAPRRQQRRRQQFEDRSSEG. Positions 233 to 242 are enriched in basic and acidic residues; that stretch reads QQFEDRSSEG.

The protein belongs to the universal ribosomal protein uS3 family. Part of the 30S ribosomal subunit. Forms a tight complex with proteins S10 and S14.

Its function is as follows. Binds the lower part of the 30S subunit head. Binds mRNA in the 70S ribosome, positioning it for translation. This chain is Small ribosomal subunit protein uS3, found in Microcystis aeruginosa (strain NIES-843 / IAM M-2473).